The following is a 527-amino-acid chain: Putative pumilio homolog 13 (527 aa).

The disordered stretch occupies residues 22-51 (ENMTTAASSSQSQPPQMQSSKFHQPENHIH). The span at 24–41 (MTTAASSSQSQPPQMQSS) shows a compositional bias: low complexity. One can recognise a PUM-HD domain in the interval 184-527 (GVNNSWRSNE…GNKILEKLNI (344 aa)). Pumilio repeat units lie at residues 205-243 (SMEN…MIFD), 244-279 (GLIV…LIVD), 283-321 (RHIS…RIMD), 322-357 (AISS…RLLE), 358-396 (VVSQ…RLIS), 397-432 (EVIE…LLVN), 433-468 (KLLR…IVVD), and 469-503 (LLRG…MLRY).

It localises to the cytoplasm. In terms of biological role, sequence-specific RNA-binding protein that regulates translation and mRNA stability by binding the 3'-UTR of target mRNAs. The sequence is that of Putative pumilio homolog 13 (APUM13) from Arabidopsis thaliana (Mouse-ear cress).